Here is a 126-residue protein sequence, read N- to C-terminus: Fluoride-specific ion channel FluC (126 aa).

Helical transmembrane passes span 3-23 (FAILGFIALGGAVGACARFLV), 37-57 (IGTLTVNVVGSFIMGVLIACV), 70-90 (VIGLGFLGALTTFSTFSMDNV), and 104-124 (NVLLNVILSISAAWIGFHWLM). The Na(+) site is built by Gly-77 and Thr-80.

Belongs to the fluoride channel Fluc/FEX (TC 1.A.43) family.

Its subcellular location is the cell inner membrane. It carries out the reaction fluoride(in) = fluoride(out). Na(+) is not transported, but it plays an essential structural role and its presence is essential for fluoride channel function. Its function is as follows. Fluoride-specific ion channel. Important for reducing fluoride concentration in the cell, thus reducing its toxicity. This is Fluoride-specific ion channel FluC from Vibrio cholerae serotype O1 (strain ATCC 39541 / Classical Ogawa 395 / O395).